An 843-amino-acid polypeptide reads, in one-letter code: Molybdenum cofactor sulfurase (843 aa).

Lysine 241 carries the post-translational modification N6-(pyridoxal phosphate)lysine. Cysteine 405 is a catalytic residue. In terms of domain architecture, MOSC spans 657-836 (QYLRKFVMPG…LMVGDIVIPS (180 aa)).

The protein belongs to the class-V pyridoxal-phosphate-dependent aminotransferase family. MOCOS subfamily. The cofactor is pyridoxal 5'-phosphate.

It catalyses the reaction Mo-molybdopterin + L-cysteine + AH2 = thio-Mo-molybdopterin + L-alanine + A + H2O. Its function is as follows. Sulfurates the molybdenum cofactor. Sulfation of molybdenum is essential for xanthine dehydrogenase (XDH) and aldehyde oxidase (ADO) enzymes in which molybdenum cofactor is liganded by 1 oxygen and 1 sulfur atom in active form. The protein is Molybdenum cofactor sulfurase of Aspergillus fumigatus (strain CBS 144.89 / FGSC A1163 / CEA10) (Neosartorya fumigata).